The following is a 255-amino-acid chain: Na(+)-translocating NADH-quinone reductase subunit C (255 aa).

Residues 12–32 (LFVVIALSLVCSIIVSTAAVG) traverse the membrane as a helical segment. Thr-223 is modified (FMN phosphoryl threonine).

This sequence belongs to the NqrC family. In terms of assembly, composed of six subunits; NqrA, NqrB, NqrC, NqrD, NqrE and NqrF. It depends on FMN as a cofactor.

It localises to the cell inner membrane. It carries out the reaction a ubiquinone + n Na(+)(in) + NADH + H(+) = a ubiquinol + n Na(+)(out) + NAD(+). Its function is as follows. NQR complex catalyzes the reduction of ubiquinone-1 to ubiquinol by two successive reactions, coupled with the transport of Na(+) ions from the cytoplasm to the periplasm. NqrA to NqrE are probably involved in the second step, the conversion of ubisemiquinone to ubiquinol. This chain is Na(+)-translocating NADH-quinone reductase subunit C, found in Vibrio anguillarum (Listonella anguillarum).